The primary structure comprises 221 residues: Probable glutathione S-transferase parC (221 aa).

The GST N-terminal domain maps to 4–83; sequence EEVILLDFWP…YIEEVWKDKA (80 aa). Glutathione contacts are provided by residues serine 14, lysine 41, isoleucine 55, and 67-68; that span reads ES. Positions 90–214 constitute a GST C-terminal domain; it reads DPYDRAQARF…PKVLEFVKVL (125 aa).

It belongs to the GST superfamily. Phi family. As to expression, abundant in seedlings and roots. It is also found in the shoot tips, flowers and leaves.

The enzyme catalyses RX + glutathione = an S-substituted glutathione + a halide anion + H(+). Conjugation of reduced glutathione to a wide number of exogenous and endogenous hydrophobic electrophiles. The polypeptide is Probable glutathione S-transferase parC (PARC) (Nicotiana tabacum (Common tobacco)).